The primary structure comprises 394 residues: 1-deoxy-D-xylulose 5-phosphate reductoisomerase (394 aa).

6 residues coordinate NADPH: threonine 28, glycine 29, serine 30, isoleucine 31, asparagine 57, and asparagine 133. Lysine 134 is a binding site for 1-deoxy-D-xylulose 5-phosphate. Residue glutamate 135 coordinates NADPH. Position 157 (aspartate 157) interacts with Mn(2+). Serine 158, glutamate 159, serine 183, and histidine 206 together coordinate 1-deoxy-D-xylulose 5-phosphate. Glutamate 159 lines the Mn(2+) pocket. Glycine 212 lines the NADPH pocket. The 1-deoxy-D-xylulose 5-phosphate site is built by serine 219, asparagine 224, lysine 225, and glutamate 228. Glutamate 228 is a Mn(2+) binding site.

Belongs to the DXR family. It depends on Mg(2+) as a cofactor. Mn(2+) is required as a cofactor.

The enzyme catalyses 2-C-methyl-D-erythritol 4-phosphate + NADP(+) = 1-deoxy-D-xylulose 5-phosphate + NADPH + H(+). The protein operates within isoprenoid biosynthesis; isopentenyl diphosphate biosynthesis via DXP pathway; isopentenyl diphosphate from 1-deoxy-D-xylulose 5-phosphate: step 1/6. In terms of biological role, catalyzes the NADPH-dependent rearrangement and reduction of 1-deoxy-D-xylulose-5-phosphate (DXP) to 2-C-methyl-D-erythritol 4-phosphate (MEP). The chain is 1-deoxy-D-xylulose 5-phosphate reductoisomerase from Nocardia farcinica (strain IFM 10152).